The chain runs to 46 residues: Cystatin WCPI-3 (46 aa).

The short motif at 35–38 is the Secondary area of contact element; it reads VVAG.

The protein belongs to the cystatin family. Phytocystatin subfamily.

Inhibitor of papain. This chain is Cystatin WCPI-3, found in Wisteria floribunda (Japanese wisteria).